Consider the following 292-residue polypeptide: NAD kinase (292 aa).

The active-site Proton acceptor is the aspartate 73. NAD(+) contacts are provided by residues 73 to 74 (DG), 147 to 148 (NE), histidine 158, arginine 175, aspartate 177, 188 to 193 (TAYSLS), and glutamine 247.

Belongs to the NAD kinase family. Requires a divalent metal cation as cofactor.

It localises to the cytoplasm. It catalyses the reaction NAD(+) + ATP = ADP + NADP(+) + H(+). Involved in the regulation of the intracellular balance of NAD and NADP, and is a key enzyme in the biosynthesis of NADP. Catalyzes specifically the phosphorylation on 2'-hydroxyl of the adenosine moiety of NAD to yield NADP. This is NAD kinase from Erwinia tasmaniensis (strain DSM 17950 / CFBP 7177 / CIP 109463 / NCPPB 4357 / Et1/99).